A 354-amino-acid polypeptide reads, in one-letter code: Divinyl chlorophyll a/b light-harvesting protein PcbG (354 aa).

6 helical membrane passes run 27-47 (FIAAHAGHTGLISFAAGASTL), 65-85 (IFLAHLASIGIGFDDAGVWTG), 88-108 (VASVAIVHIIASLVYAGGALS), 201-221 (VLGGHAFLAFVEITGGAFHIA), 241-261 (AVLSFSLAGIGWMAIVAAFWC), and 308-328 (LTNVHYYFGFFFLQGHLWHAI).

Belongs to the PsbB/PsbC family. IsiA/Pcb subfamily. As to quaternary structure, the antenna complex consists of divinyl chlorophylls (a and b) and divinyl chlorophyll a/b binding proteins and binds more divinyl chlorophyll b than does the antenna complex from high-light-adapted Prochlorococcus. Divinyl chlorophyll a serves as cofactor. It depends on divinyl chlorophyll b as a cofactor.

It is found in the cellular thylakoid membrane. In terms of biological role, the antenna complex functions as a light receptor, it captures and delivers excitation energy to photosystems II and I. The Prochlorales pcb genes are not related to higher plant LHCs. The sequence is that of Divinyl chlorophyll a/b light-harvesting protein PcbG (pcbG) from Prochlorococcus marinus (strain NATL2A).